The following is a 288-amino-acid chain: Aquaporin PIP1-5 (288 aa).

The interval 1-36 is disordered; sequence MEGKEEDVRLGANRYSERQPIGTAAQGTEEKDYKEP. 2 helical membrane-spanning segments follow: residues 57–77 and 92–114; these read IAEF…VMGV and IAWS…SGGH. The short motif at 116-118 is the NPA 1 element; that stretch reads NPA. The next 3 membrane-spanning stretches (helical) occupy residues 135-155, 177-197, and 211-231; these read LFYM…VKGF, GDGL…VFSA, and ILAP…TIPI. Residues 237–239 carry the NPA 2 motif; it reads NPA. A helical membrane pass occupies residues 259 to 279; it reads IFWVGPFIGAALAAIYHVVII.

The protein belongs to the MIP/aquaporin (TC 1.A.8) family. PIP (TC 1.A.8.11) subfamily. In terms of tissue distribution, highly expressed in roots and at lower levels in anthers and silks.

The protein resides in the cell membrane. Water channel required to facilitate the transport of water across cell membrane. The chain is Aquaporin PIP1-5 (PIP1-5) from Zea mays (Maize).